Here is a 194-residue protein sequence, read N- to C-terminus: Large ribosomal subunit protein bL9 (194 aa).

The protein belongs to the bacterial ribosomal protein bL9 family.

Its function is as follows. Binds to the 23S rRNA. This is Large ribosomal subunit protein bL9 from Paracoccus denitrificans (strain Pd 1222).